The following is a 383-amino-acid chain: 1-deoxy-D-xylulose 5-phosphate reductoisomerase (383 aa).

Threonine 10, glycine 11, serine 12, isoleucine 13, asparagine 38, and asparagine 121 together coordinate NADPH. Position 122 (lysine 122) interacts with 1-deoxy-D-xylulose 5-phosphate. Residue glutamate 123 participates in NADPH binding. Aspartate 147 serves as a coordination point for Mn(2+). The 1-deoxy-D-xylulose 5-phosphate site is built by serine 148, glutamate 149, serine 172, and histidine 195. Glutamate 149 contacts Mn(2+). Glycine 201 is a binding site for NADPH. 1-deoxy-D-xylulose 5-phosphate is bound by residues serine 208, asparagine 213, lysine 214, and glutamate 217. A Mn(2+)-binding site is contributed by glutamate 217.

Belongs to the DXR family. Requires Mg(2+) as cofactor. The cofactor is Mn(2+).

It catalyses the reaction 2-C-methyl-D-erythritol 4-phosphate + NADP(+) = 1-deoxy-D-xylulose 5-phosphate + NADPH + H(+). It functions in the pathway isoprenoid biosynthesis; isopentenyl diphosphate biosynthesis via DXP pathway; isopentenyl diphosphate from 1-deoxy-D-xylulose 5-phosphate: step 1/6. In terms of biological role, catalyzes the NADPH-dependent rearrangement and reduction of 1-deoxy-D-xylulose-5-phosphate (DXP) to 2-C-methyl-D-erythritol 4-phosphate (MEP). This Vesicomyosocius okutanii subsp. Calyptogena okutanii (strain HA) protein is 1-deoxy-D-xylulose 5-phosphate reductoisomerase.